Consider the following 1003-residue polypeptide: Helicase MOV-10 (1003 aa).

The residue at position 148 (lysine 148) is an N6-acetyllysine. Phosphothreonine occurs at positions 160 and 254. Serine 432 carries the phosphoserine modification. An ATP-binding site is contributed by 524–531 (GPPGTGKT). A DEAG box motif is present at residues 645–648 (DEAG). The interval 921–965 (NPLLLGHDPDWKVFLEFCKENGGYTGCPFPAKLDLQQGQNLLQGL) is interaction with AGO2 and APOBEC3G. Residues 966–1003 (SKLSPSTSGPHSHDYLPQEREGEGGLSLQVEPEWRNEL) form a disordered region. Residues serine 969 and serine 977 each carry the phosphoserine modification. Residues 976–988 (HSHDYLPQEREGE) are compositionally biased toward basic and acidic residues.

This sequence belongs to the DNA2/NAM7 helicase family. SDE3 subfamily. As to quaternary structure, interacts with DICER1, AGO2, TARBP2, EIF6 and RPL7A (60S ribosome subunit); they form a large RNA-induced silencing complex (RISC). Interacts with APOBEC3G in an RNA-dependent manner. Interacts with TRIM71 (via NHL repeats) in an RNA-dependent manner. Interacts with both protein products of LIRE1, ORF1p and ORF2p. Interacts with TUT4 and, to a lesser extent, TUT7; the interactions are RNA-dependent. Interacts with AGO2, TNRC6B and UPF1; the interactions are direct and RNA-dependent. Interacts with FMR1; this interaction is direct, occurs in an RNA-dependent manner on polysomes and induces association of MOV10 with RNAs. Interacts with SHFL; the interaction increases in presence of RNA. Interacts with DHX34; the interaction is RNA-independent. Interacts with IKBKE. Interacts with RBM46. (Microbial infection) Interacts with the human hepatitis delta virus (HDV) antigen HDAg. In terms of assembly, (Microbial infection) Interacts with HIV-1 protein GAG. Post-translationally, ubiquitinated by the DCX(DCAF12) complex that specifically recognizes the glutamate-leucine (Glu-Leu) degron at the C-terminus, leading to its degradation. (Microbial infection) Cleaved and targeted for degradation by picornavirus proteases.

It localises to the cytoplasm. It is found in the P-body. The protein resides in the cytoplasmic ribonucleoprotein granule. The protein localises to the stress granule. Its subcellular location is the nucleus. It carries out the reaction ATP + H2O = ADP + phosphate + H(+). 5' to 3' RNA helicase that is involved in a number of cellular roles ranging from mRNA metabolism and translation, modulation of viral infectivity, inhibition of retrotransposition, or regulation of synaptic transmission. Plays an important role in innate antiviral immunity by promoting type I interferon production. Mechanistically, specifically uses IKKepsilon/IKBKE as the mediator kinase for IRF3 activation. Blocks HIV-1 virus replication at a post-entry step. Counteracts HIV-1 Vif-mediated degradation of APOBEC3G through its helicase activity by interfering with the ubiquitin-proteasome pathway. Also inhibits hepatitis B virus/HBV replication by interacting with HBV RNA and thereby inhibiting the early step of viral reverse transcription. Contributes to UPF1 mRNA target degradation by translocation along 3' UTRs. Required for microRNA (miRNA)-mediated gene silencing by the RNA-induced silencing complex (RISC). Required for both miRNA-mediated translational repression and miRNA-mediated cleavage of complementary mRNAs by RISC. In cooperation with FMR1, regulates miRNA-mediated translational repression by AGO2. Restricts retrotransposition of long interspersed element-1 (LINE-1) in cooperation with TUT4 and TUT7 counteracting the RNA chaperonne activity of L1RE1. Facilitates LINE-1 uridylation by TUT4 and TUT7. Required for embryonic viability and for normal central nervous system development and function. Plays two critical roles in early brain development: suppresses retroelements in the nucleus by directly inhibiting cDNA synthesis, while regulates cytoskeletal mRNAs to influence neurite outgrowth in the cytosol. May function as a messenger ribonucleoprotein (mRNP) clearance factor. In terms of biological role, (Microbial infection) Required for RNA-directed transcription and replication of the human hepatitis delta virus (HDV). Interacts with small capped HDV RNAs derived from genomic hairpin structures that mark the initiation sites of RNA-dependent HDV RNA transcription. The protein is Helicase MOV-10 of Homo sapiens (Human).